The chain runs to 190 residues: Probable oligoribonuclease (190 aa).

Residues 19–181 (MVWVDLEMTG…QDIEESIEEL (163 aa)) enclose the Exonuclease domain. Tyr140 is a catalytic residue.

The protein belongs to the oligoribonuclease family.

Functionally, 3'-to-5' exoribonuclease specific for small oligoribonucleotides. This Dictyostelium discoideum (Social amoeba) protein is Probable oligoribonuclease (rexo2-1).